The sequence spans 487 residues: Malonate-semialdehyde dehydrogenase (487 aa).

7 residues coordinate NAD(+): A150, F152, K176, E179, R180, S229, and T251. C284 functions as the Nucleophile in the catalytic mechanism. NAD(+) is bound at residue E382.

Belongs to the aldehyde dehydrogenase family. IolA subfamily. In terms of assembly, homotetramer.

The catalysed reaction is 3-oxopropanoate + NAD(+) + CoA + H2O = hydrogencarbonate + acetyl-CoA + NADH + H(+). It carries out the reaction 2-methyl-3-oxopropanoate + NAD(+) + CoA + H2O = propanoyl-CoA + hydrogencarbonate + NADH + H(+). The protein operates within polyol metabolism; myo-inositol degradation into acetyl-CoA; acetyl-CoA from myo-inositol: step 7/7. Functionally, catalyzes the oxidation of malonate semialdehyde (MSA) and methylmalonate semialdehyde (MMSA) into acetyl-CoA and propanoyl-CoA, respectively. Is involved in a myo-inositol catabolic pathway. Bicarbonate, and not CO2, is the end-product of the enzymatic reaction. The sequence is that of Malonate-semialdehyde dehydrogenase from Bacillus velezensis (strain DSM 23117 / BGSC 10A6 / LMG 26770 / FZB42) (Bacillus amyloliquefaciens subsp. plantarum).